Here is a 496-residue protein sequence, read N- to C-terminus: MFYAFKDFEKKETLLIGLFKKSRLYGKAEEIDRLLNGQLSQLLKDGDVSSKKAKVSKIFTPSLQGVKRIYIVGLGREAEFTFEDAKQCFAEAVQLIHKDRKQELTVMLDSFVSEEVPAADAAHALAESCMLSCYEVQDYKHRSNVPDQCLQSVYVLTDHDLKEIQASLHVGQVYGNATNSARTLVNMPGNMLTAADLASYAAELAAKYEFECEILEKAEMEELGMGGLLAVNQGSEEPPKMIVLKYQGKETWDDVIGLVGKGITFDTGGYSIKTKSGIVGMKSDMGGAASVLGAMEAIGELRPEQNVLAVIPSTDNMISGSAMKPDDVIVSLSGKTIEILNTDAEGRLALADGLTYAKHHGASVLIDVATLTGGVVVALGTETTGAMTNHDPLYQQVRQAAEEAGEAIWQLPITEKDKKRVKNSQMADLNNSPGREGHAIMAGTFLGEFAEQTPWVHLDIAGTATTAQNSCFGPKGGTGVMVRTLVTFVERFSGNL.

Residues K261 and D266 each contribute to the Mn(2+) site. K273 is an active-site residue. 3 residues coordinate Mn(2+): D284, D343, and E345. R347 is an active-site residue.

Belongs to the peptidase M17 family. It depends on Mn(2+) as a cofactor.

It is found in the cytoplasm. The enzyme catalyses Release of an N-terminal amino acid, Xaa-|-Yaa-, in which Xaa is preferably Leu, but may be other amino acids including Pro although not Arg or Lys, and Yaa may be Pro. Amino acid amides and methyl esters are also readily hydrolyzed, but rates on arylamides are exceedingly low.. The catalysed reaction is Release of an N-terminal amino acid, preferentially leucine, but not glutamic or aspartic acids.. Its function is as follows. Presumably involved in the processing and regular turnover of intracellular proteins. Catalyzes the removal of unsubstituted N-terminal amino acids from various peptides. The polypeptide is Probable cytosol aminopeptidase (Bacillus licheniformis (strain ATCC 14580 / DSM 13 / JCM 2505 / CCUG 7422 / NBRC 12200 / NCIMB 9375 / NCTC 10341 / NRRL NRS-1264 / Gibson 46)).